We begin with the raw amino-acid sequence, 133 residues long: Holo-[acyl-carrier-protein] synthase (133 aa).

Positions 8 and 57 each coordinate Mg(2+).

It belongs to the P-Pant transferase superfamily. AcpS family. The cofactor is Mg(2+).

The protein localises to the cytoplasm. It catalyses the reaction apo-[ACP] + CoA = holo-[ACP] + adenosine 3',5'-bisphosphate + H(+). Functionally, transfers the 4'-phosphopantetheine moiety from coenzyme A to a Ser of acyl-carrier-protein. The protein is Holo-[acyl-carrier-protein] synthase of Parvibaculum lavamentivorans (strain DS-1 / DSM 13023 / NCIMB 13966).